Here is a 485-residue protein sequence, read N- to C-terminus: Keratin, type I cytoskeletal 14 (485 aa).

Polar residues predominate over residues 1-15 (MATCSRQFTSSSSMK). The disordered stretch occupies residues 1–21 (MATCSRQFTSSSSMKGSCGIG). The head stretch occupies residues 1 to 121 (MATCSRQFTS…GLGDGLLVGS (121 aa)). The coil 1A stretch occupies residues 122–157 (EKVTMQNLNDRLATYLDKVRALEEANSDLEVKIRDW). The IF rod domain maps to 122–433 (EKVTMQNLND…RLLEGEDAHL (312 aa)). Residues 158-175 (YQRQRPTEIKDYSPYFKT) are linker 1. Residues 176–267 (IEDLKSKILA…KNHEEEMASM (92 aa)) form a coil 1B region. The linker 12 stretch occupies residues 268–290 (RGQVGGDVNVEMDAAPGVDLSRI). The coil 2 stretch occupies residues 291–429 (LNEMRDQYEK…ATYRRLLEGE (139 aa)). The interval 430–485 (DAHLSSAQFSSSSQFSSGSQSSRDVTSTNRQIRTKVMDVHDGKVVSTHEQVLRTKN) is tail. Residues 432-485 (HLSSAQFSSSSQFSSGSQSSRDVTSTNRQIRTKVMDVHDGKVVSTHEQVLRTKN) form an interaction with Type I keratins and keratin filaments region. A compositionally biased stretch (low complexity) spans 437 to 451 (QFSSSSQFSSGSQSS). The disordered stretch occupies residues 437 to 458 (QFSSSSQFSSGSQSSRDVTSTN). Phosphoserine is present on S448.

This sequence belongs to the intermediate filament family. As to quaternary structure, heterotetramer of two type I and two type II keratins. Forms a disulfide-linked heterodimer (via 2B domains) with KRT5 (via 2B domains). Forms a heterodimer with KRT1; the interaction is more abundant in the absence of KRT5. Interacts with TRADD and with keratin filaments. Associates with other type I keratins. Interacts with EPPK1. Interacts with KLHL24. Interacts with PKP1 (via N-terminus) and PKP2. A disulfide bond is formed between rather than within filaments and promotes the formation of a keratin filament cage around the nucleus. In terms of processing, ubiquitinated by the BCR(KLHL24) E3 ubiquitin ligase complex. Expressed in most cells of squamous cell carcinomas, in spinous and suprabasal cells around the branching papillary region of papillomas, and weakly in a few proliferative cells of hyperplastic tissue.

The protein resides in the cytoplasm. It is found in the nucleus. The nonhelical tail domain is involved in promoting KRT5-KRT14 filaments to self-organize into large bundles and enhances the mechanical properties involved in resilience of keratin intermediate filaments in vitro. This chain is Keratin, type I cytoskeletal 14 (Krt14), found in Rattus norvegicus (Rat).